Consider the following 406-residue polypeptide: NADH-ubiquinone oxidoreductase 49 kDa subunit (406 aa).

Belongs to the complex I 49 kDa subunit family. In terms of assembly, complex I is composed of 45 different subunits. Component of the iron-sulfur (IP) fragment of the enzyme.

Its subcellular location is the mitochondrion inner membrane. The enzyme catalyses a ubiquinone + NADH + 5 H(+)(in) = a ubiquinol + NAD(+) + 4 H(+)(out). Core subunit of the mitochondrial membrane respiratory chain NADH dehydrogenase (Complex I) that is believed to belong to the minimal assembly required for catalysis. Complex I functions in the transfer of electrons from NADH to the respiratory chain. The immediate electron acceptor for the enzyme is believed to be ubiquinone. The sequence is that of NADH-ubiquinone oxidoreductase 49 kDa subunit (nad7) from Dictyostelium citrinum (Slime mold).